We begin with the raw amino-acid sequence, 414 residues long: Clusterin-associated protein 1 (414 aa).

Residues 198-291 are a coiled coil; that stretch reads KTKDLLNNVA…ERFEEAKNTL (94 aa). The disordered stretch occupies residues 305–414; it reads LLKSGSNDDS…EPLDESDNDF (110 aa). Acidic residues-rich tracts occupy residues 312 to 328 and 360 to 389; these read DDSDVDIQEDDESDSEL and DSDDNEDSEESEIDMEDDDEDEDDDLEDES. Phosphoserine is present on residues Ser314, Ser324, and Ser326. Ser410 is modified (phosphoserine).

The protein belongs to the CLUAP1 family. Interacts with CLU/clusterin. Interacts with UBXN10; the interaction is direct.

It is found in the cell projection. The protein localises to the cilium. Its subcellular location is the nucleus. Its function is as follows. Required for cilia biogenesis. Appears to function within the multiple intraflagellar transport complex B (IFT-B). Key regulator of hedgehog signaling. The sequence is that of Clusterin-associated protein 1 (CLUAP1) from Macaca fascicularis (Crab-eating macaque).